A 254-amino-acid polypeptide reads, in one-letter code: Anti-sigma-M factor RsmA (254 aa).

Residues 1–112 (MSAADKDPDK…AARPHVHPVR (112 aa)) are Cytoplasmic-facing. Residues 113–133 (MIAGAAGLCAVATAIGVGAVV) form a helical membrane-spanning segment. Over 134 to 254 (DAPPPAPSAP…LLASTVVPRA (121 aa)) the chain is Extracellular.

In terms of assembly, interacts with ECF RNA polymerase sigma factor SigM; this should inhibit the interaction of SigM with the RNA polymerase catalytic core. In terms of processing, probably cleaved within the membrane by Rip1 near the cytoplasmic membrane interface.

The protein localises to the cell membrane. In terms of biological role, an anti-sigma factor for extracytoplasmic function (ECF) sigma factor SigM. ECF sigma factors are held in an inactive form by an anti-sigma factor until released by regulated intramembrane proteolysis (RIP). RIP occurs when an extracytoplasmic signal triggers a concerted proteolytic cascade to transmit information and elicit cellular responses. The membrane-spanning regulatory substrate protein is first cut extracytoplasmically (site-1 protease, S1P), then within the membrane itself (site-2 protease, S2P, Rip1), while cytoplasmic proteases finish degrading the regulatory protein, liberating the sigma factor. In Mycobacterium tuberculosis (strain ATCC 35801 / TMC 107 / Erdman), this protein is Anti-sigma-M factor RsmA (rsmA).